The chain runs to 67 residues: Large ribosomal subunit protein bL32 (67 aa).

Residues 1 to 19 (MAVPKRKMSRANTRMRRSQ) are compositionally biased toward basic residues. The interval 1–22 (MAVPKRKMSRANTRMRRSQWKA) is disordered.

The protein belongs to the bacterial ribosomal protein bL32 family.

The chain is Large ribosomal subunit protein bL32 from Kocuria rhizophila (strain ATCC 9341 / DSM 348 / NBRC 103217 / DC2201).